Here is a 275-residue protein sequence, read N- to C-terminus: Elongation factor Ts (275 aa).

The segment at 80-83 (TDFV) is involved in Mg(2+) ion dislocation from EF-Tu.

It belongs to the EF-Ts family.

It localises to the cytoplasm. Associates with the EF-Tu.GDP complex and induces the exchange of GDP to GTP. It remains bound to the aminoacyl-tRNA.EF-Tu.GTP complex up to the GTP hydrolysis stage on the ribosome. The polypeptide is Elongation factor Ts (Kineococcus radiotolerans (strain ATCC BAA-149 / DSM 14245 / SRS30216)).